Here is a 251-residue protein sequence, read N- to C-terminus: Octanoyltransferase (251 aa).

A BPL/LPL catalytic domain is found at 56-241; the sequence is ADTGDEIWVV…NLDGASAAAD (186 aa). Residues 96-103, 168-170, and 181-183 contribute to the substrate site; these read RGGQITYH, ALG, and GLS. Cys199 functions as the Acyl-thioester intermediate in the catalytic mechanism.

It belongs to the LipB family.

Its subcellular location is the cytoplasm. The enzyme catalyses octanoyl-[ACP] + L-lysyl-[protein] = N(6)-octanoyl-L-lysyl-[protein] + holo-[ACP] + H(+). It functions in the pathway protein modification; protein lipoylation via endogenous pathway; protein N(6)-(lipoyl)lysine from octanoyl-[acyl-carrier-protein]: step 1/2. In terms of biological role, catalyzes the transfer of endogenously produced octanoic acid from octanoyl-acyl-carrier-protein onto the lipoyl domains of lipoate-dependent enzymes. Lipoyl-ACP can also act as a substrate although octanoyl-ACP is likely to be the physiological substrate. The polypeptide is Octanoyltransferase (Burkholderia orbicola (strain AU 1054)).